The sequence spans 319 residues: Thioredoxin reductase (319 aa).

Residues 11 to 14, 40 to 41, glutamine 45, asparagine 54, valine 87, cysteine 145, aspartate 288, and 295 to 297 each bind FAD; these read SGPA, VA, and RQA. A disulfide bridge links cysteine 142 with cysteine 145.

Belongs to the class-II pyridine nucleotide-disulfide oxidoreductase family. Homodimer. FAD serves as cofactor.

The protein localises to the cytoplasm. The catalysed reaction is [thioredoxin]-dithiol + NADP(+) = [thioredoxin]-disulfide + NADPH + H(+). The protein is Thioredoxin reductase (TRR1) of Eremothecium gossypii (strain ATCC 10895 / CBS 109.51 / FGSC 9923 / NRRL Y-1056) (Yeast).